We begin with the raw amino-acid sequence, 154 residues long: Protein-export protein SecB (154 aa).

It belongs to the SecB family. Homotetramer, a dimer of dimers. One homotetramer interacts with 1 SecA dimer.

Its subcellular location is the cytoplasm. One of the proteins required for the normal export of preproteins out of the cell cytoplasm. It is a molecular chaperone that binds to a subset of precursor proteins, maintaining them in a translocation-competent state. It also specifically binds to its receptor SecA. The chain is Protein-export protein SecB from Blochmanniella pennsylvanica (strain BPEN).